A 1384-amino-acid polypeptide reads, in one-letter code: DNA-directed RNA polymerase subunit beta' (1384 aa).

Residues Cys-81, Cys-83, Cys-96, and Cys-99 each contribute to the Zn(2+) site. Asp-472, Asp-474, and Asp-476 together coordinate Mg(2+).

Belongs to the RNA polymerase beta' chain family. As to quaternary structure, the RNAP catalytic core consists of 2 alpha, 1 beta, 1 beta' and 1 omega subunit. When a sigma factor is associated with the core the holoenzyme is formed, which can initiate transcription. It depends on Mg(2+) as a cofactor. The cofactor is Zn(2+).

It carries out the reaction RNA(n) + a ribonucleoside 5'-triphosphate = RNA(n+1) + diphosphate. In terms of biological role, DNA-dependent RNA polymerase catalyzes the transcription of DNA into RNA using the four ribonucleoside triphosphates as substrates. The polypeptide is DNA-directed RNA polymerase subunit beta' (Opitutus terrae (strain DSM 11246 / JCM 15787 / PB90-1)).